Consider the following 269-residue polypeptide: ParA family protein MG470 (269 aa).

Belongs to the ParA family.

The polypeptide is ParA family protein MG470 (Mycoplasma genitalium (strain ATCC 33530 / DSM 19775 / NCTC 10195 / G37) (Mycoplasmoides genitalium)).